The sequence spans 101 residues: Urease subunit beta (101 aa).

This sequence belongs to the urease beta subunit family. In terms of assembly, heterotrimer of UreA (gamma), UreB (beta) and UreC (alpha) subunits. Three heterotrimers associate to form the active enzyme.

It localises to the cytoplasm. The enzyme catalyses urea + 2 H2O + H(+) = hydrogencarbonate + 2 NH4(+). The protein operates within nitrogen metabolism; urea degradation; CO(2) and NH(3) from urea (urease route): step 1/1. This chain is Urease subunit beta, found in Ruegeria pomeroyi (strain ATCC 700808 / DSM 15171 / DSS-3) (Silicibacter pomeroyi).